Consider the following 257-residue polypeptide: uncharacterized protein (257 aa).

This is an uncharacterized protein from Acidianus bottle-shaped virus (isolate Italy/Pozzuoli) (ABV).